A 292-amino-acid polypeptide reads, in one-letter code: NAD kinase (292 aa).

Aspartate 73 acts as the Proton acceptor in catalysis. NAD(+)-binding positions include 73–74 (DG), 147–148 (NE), histidine 158, arginine 175, aspartate 177, 188–193 (TAYSLS), and glutamine 247.

It belongs to the NAD kinase family. A divalent metal cation is required as a cofactor.

The protein localises to the cytoplasm. It carries out the reaction NAD(+) + ATP = ADP + NADP(+) + H(+). In terms of biological role, involved in the regulation of the intracellular balance of NAD and NADP, and is a key enzyme in the biosynthesis of NADP. Catalyzes specifically the phosphorylation on 2'-hydroxyl of the adenosine moiety of NAD to yield NADP. The protein is NAD kinase of Serratia proteamaculans (strain 568).